The primary structure comprises 362 residues: Porin Omp2b (362 aa).

Residues 1–22 (MNIKSLLLGSAAALVAASGAQA) form the signal peptide.

This sequence belongs to the alphaproteobacteria porin family. Homotrimer.

It is found in the cell outer membrane. Functionally, forms passive diffusion pores that allow small molecular weight hydrophilic materials across the outer membrane. This is Porin Omp2b (omp2b) from Brucella canis (strain ATCC 23365 / NCTC 10854 / RM-666).